Reading from the N-terminus, the 105-residue chain is Ferredoxin--nitrite reductase, chloroplastic (105 aa).

Residues C28 and C32 each coordinate [4Fe-4S] cluster. Siroheme is bound at residue C32.

Belongs to the nitrite and sulfite reductase 4Fe-4S domain family. In terms of assembly, monomer. Siroheme is required as a cofactor. The cofactor is [4Fe-4S] cluster. In terms of tissue distribution, highest expression in roots and hypocotyls. Some expression in cotyledonary whorls.

It is found in the plastid. It localises to the chloroplast. The catalysed reaction is 6 oxidized [2Fe-2S]-[ferredoxin] + NH4(+) + 2 H2O = nitrite + 6 reduced [2Fe-2S]-[ferredoxin] + 8 H(+). The protein operates within nitrogen metabolism; nitrate reduction (assimilation). This is Ferredoxin--nitrite reductase, chloroplastic (NIR) from Pinus sylvestris (Scotch pine).